The following is a 45-amino-acid chain: Putative metallothionein-like protein 1B (45 aa).

It belongs to the metallothionein superfamily. Type 15 family.

Its function is as follows. Metallothioneins have a high content of cysteine residues that bind various heavy metals. Confers tolerance to cadmium (Cd) and plays a role in Cd and zinc (Zn) homeostasis. The sequence is that of Putative metallothionein-like protein 1B (MT1B) from Arabidopsis thaliana (Mouse-ear cress).